The primary structure comprises 122 residues: MSLAMTAFRMMAVALVVVVASSTTWARSLEGSSSPVTSLTRGRSLNKRAAFDPSCTGVYDRELLGRLSRLCDDCYNVFREPKVAMECRSNCFFNPAFVQCLEYLIPAELHEEYQALVQTVGK.

Positions 1 to 26 (MSLAMTAFRMMAVALVVVVASSTTWA) are cleaved as a signal peptide. 3 disulfide bridges follow: Cys55–Cys91, Cys71–Cys87, and Cys74–Cys100. Val120 carries the post-translational modification Valine amide.

The protein belongs to the arthropod CHH/MIH/GIH/VIH hormone family. In terms of tissue distribution, produced by the medulla terminalis X-organ in the eyestalks and transported to the sinus gland where they are stored and released.

It is found in the secreted. In terms of biological role, hormone found in the sinus gland of isopods and decapods which controls the blood sugar level. Has a secretagogue action over the amylase released from the midgut gland. May act as a stress hormone and may be involved in the control of molting and reproduction. The chain is Crustacean hyperglycemic hormones 7 from Penaeus japonicus (Kuruma prawn).